A 286-amino-acid polypeptide reads, in one-letter code: Aminoglycoside N(3)-acetyltransferase VIII (286 aa).

The protein belongs to the antibiotic N-acetyltransferase family.

The catalysed reaction is a 2-deoxystreptamine antibiotic + acetyl-CoA = an N(3)-acetyl-2-deoxystreptamine antibiotic + CoA + H(+). In terms of biological role, resistance to neomycin. This Streptomyces fradiae (Streptomyces roseoflavus) protein is Aminoglycoside N(3)-acetyltransferase VIII (aacC8).